A 388-amino-acid polypeptide reads, in one-letter code: Pepsin A-1 (388 aa).

A signal peptide spans 1 to 15 (MKWLLLLGLVALSEC). Propeptides (activation peptide) lie at residues 16-40 (IIYKVPLVRKKSLRRNLSEHGLLKD) and 41-62 (FLKKHNLNPASKYFPQAEAPTL). The Peptidase A1 domain maps to 76 to 385 (YFGTIGIGTP…DRANNQVGLA (310 aa)). Residue D94 is part of the active site. An intrachain disulfide couples C107 to C112. At S130 the chain carries Phosphoserine. C268 and C272 are oxidised to a cystine. The active site involves D277. A disulfide bridge connects residues C311 and C344.

Belongs to the peptidase A1 family. In terms of processing, each pepsinogen is converted to corresponding pepsin at pH 2.0 in part as a result of the release of a 47 AA activation segment and in part as a result of stepwise proteolytic cleavage via an intermediate form(s).

It localises to the secreted. The catalysed reaction is Preferential cleavage: hydrophobic, preferably aromatic, residues in P1 and P1' positions. Cleaves 1-Phe-|-Val-2, 4-Gln-|-His-5, 13-Glu-|-Ala-14, 14-Ala-|-Leu-15, 15-Leu-|-Tyr-16, 16-Tyr-|-Leu-17, 23-Gly-|-Phe-24, 24-Phe-|-Phe-25 and 25-Phe-|-Tyr-26 bonds in the B chain of insulin.. In terms of biological role, shows particularly broad specificity; although bonds involving phenylalanine and leucine are preferred, many others are also cleaved to some extent. The chain is Pepsin A-1 (PGA) from Macaca fuscata fuscata (Japanese macaque).